We begin with the raw amino-acid sequence, 855 residues long: Protein translocase subunit SecA (855 aa).

ATP-binding positions include Q88, 106–110, and D509; that span reads GEGKT. The tract at residues 815–837 is disordered; that stretch reads EANLQNKFEKKPARNEPCPCGSG. The Zn(2+) site is built by C832, C834, C843, and C844.

This sequence belongs to the SecA family. In terms of assembly, monomer and homodimer. Part of the essential Sec protein translocation apparatus which comprises SecA, SecYEG and auxiliary proteins SecDF-YajC and YidC. The cofactor is Zn(2+).

The protein localises to the cell inner membrane. It is found in the cytoplasm. The catalysed reaction is ATP + H2O + cellular proteinSide 1 = ADP + phosphate + cellular proteinSide 2.. Functionally, part of the Sec protein translocase complex. Interacts with the SecYEG preprotein conducting channel. Has a central role in coupling the hydrolysis of ATP to the transfer of proteins into and across the cell membrane, serving as an ATP-driven molecular motor driving the stepwise translocation of polypeptide chains across the membrane. This Campylobacter fetus subsp. fetus (strain 82-40) protein is Protein translocase subunit SecA.